The sequence spans 140 residues: Calcium-binding protein B (140 aa).

2 consecutive EF-hand domains span residues 38–73 and 74–109; these read ATLS…INQP and KTYL…KTSS. Asp51, Asn53, Ser55, Asp57, and Glu62 together coordinate Ca(2+).

This Dictyostelium discoideum (Social amoeba) protein is Calcium-binding protein B (cbpB).